Reading from the N-terminus, the 81-residue chain is Putative membrane protein insertion efficiency factor (81 aa).

Belongs to the UPF0161 family.

The protein localises to the cell inner membrane. Its function is as follows. Could be involved in insertion of integral membrane proteins into the membrane. This Pseudomonas syringae pv. syringae (strain B728a) protein is Putative membrane protein insertion efficiency factor.